A 50-amino-acid polypeptide reads, in one-letter code: uncharacterized protein (50 aa).

This is an uncharacterized protein from Dictyostelium discoideum (Social amoeba).